The sequence spans 714 residues: GATA zinc finger domain-containing protein 10 (714 aa).

Disordered stretches follow at residues 28 to 97 (YIQQ…NKQI), 115 to 180 (TMPH…QQQQ), 266 to 362 (MPMN…QQQQ), 394 to 419 (QQQQ…ESMD), 454 to 476 (MHLQ…QQIQ), and 528 to 621 (IQQQ…RRRT). Low complexity-rich tracts occupy residues 30–94 (QQQQ…NNNN) and 130–147 (QQQQ…QHPH). A compositionally biased stretch (basic residues) spans 148–168 (QQQHPHQQQHPHQQQHPHQQQ). Residues 169–180 (HPHQQQIQQQQQ) show a composition bias toward low complexity. The span at 271–282 (GGNSRKNSFDMY) shows a compositional bias: polar residues. 2 stretches are compositionally biased toward low complexity: residues 283–322 (NNNN…NNNI) and 340–362 (QHQQ…QQQQ). Composition is skewed to low complexity over residues 457–476 (QQQQ…QQIQ) and 528–549 (IQQQ…TPNN). Over residues 550–569 (GSPSSSDGKSPVNSNTAITS) the composition is skewed to polar residues. Over residues 570 to 588 (NNNNNNNNNNNNNNNNNNN) the composition is skewed to low complexity. Residues 631–656 (CHYCEVTETPEWRRGPDGDHTLCNAC) form a GATA-type zinc finger. A coiled-coil region spans residues 661–694 (AKSQKKLAREKELEKQKELEREKERENTRKHSID). Over residues 667–693 (LAREKELEKQKELEREKERENTRKHSI) the composition is skewed to basic and acidic residues. Residues 667-714 (LAREKELEKQKELEREKERENTRKHSIDFMLMNDTSSAPTNSQNPTPN) form a disordered region. The span at 699–714 (NDTSSAPTNSQNPTPN) shows a compositional bias: polar residues.

This Dictyostelium discoideum (Social amoeba) protein is GATA zinc finger domain-containing protein 10 (gtaJ).